The primary structure comprises 79 residues: Protein GOLVEN 2 (79 aa).

Positions 1-26 (MAIRVSHKSFLVALLLILFISSPTQA) are cleaved as a signal peptide. A propeptide spanning residues 27–65 (RSLREVVRNRTLLVVEKSQESRKIRHEGGGSDVDGLMDM) is cleaved from the precursor. The disordered stretch occupies residues 49-79 (KIRHEGGGSDVDGLMDMDYNSANKKRPIHNR). Position 67 is a sulfotyrosine (Tyr67). The residue at position 75 (Pro75) is a Hydroxyproline.

It belongs to the RGF family. As to quaternary structure, binds to LRR receptor-like serine/threonine-protein kinases to trigger their dimerization with SERK proteins and subsequent signaling. In terms of tissue distribution, expressed in siliques, stems, hypocotyls, shoot apex, leaves, flowers and cotyledons, and, to a lower extent, in roots.

It is found in the secreted. The protein resides in the endoplasmic reticulum. Functionally, signaling peptide (root growth factor) that regulates the pattern of root growth and lateral root development by modulating the length and the number of cortical cells in the root apical meristem (RAM), and the anticlinal asymmetric cell divisions in lateral root initiation cells. Also involved in the regulation of hypocotyl bending and root gravitropism, probably by influencing the formation of auxin gradients. Maintains the postembryonic root stem cell niche. In Arabidopsis thaliana (Mouse-ear cress), this protein is Protein GOLVEN 2.